We begin with the raw amino-acid sequence, 156 residues long: UPF0336 protein SACE_6876 (156 aa).

Residues 8-128 (IGREYPPTPA…DFLTVRAEIT (121 aa)) form the MaoC-like domain.

The protein belongs to the UPF0336 family.

The polypeptide is UPF0336 protein SACE_6876 (Saccharopolyspora erythraea (strain ATCC 11635 / DSM 40517 / JCM 4748 / NBRC 13426 / NCIMB 8594 / NRRL 2338)).